The primary structure comprises 257 residues: Hydroxyacylglutathione hydrolase (257 aa).

Residues H54, H56, D58, H59, H113, D137, and H175 each coordinate Zn(2+).

It belongs to the metallo-beta-lactamase superfamily. Glyoxalase II family. Monomer. Zn(2+) serves as cofactor.

It catalyses the reaction an S-(2-hydroxyacyl)glutathione + H2O = a 2-hydroxy carboxylate + glutathione + H(+). It participates in secondary metabolite metabolism; methylglyoxal degradation; (R)-lactate from methylglyoxal: step 2/2. Thiolesterase that catalyzes the hydrolysis of S-D-lactoyl-glutathione to form glutathione and D-lactic acid. This chain is Hydroxyacylglutathione hydrolase, found in Microcystis aeruginosa (strain NIES-843 / IAM M-2473).